The following is a 156-amino-acid chain: Cyanate hydratase (156 aa).

Residues arginine 96, glutamate 99, and serine 122 contribute to the active site.

This sequence belongs to the cyanase family.

The enzyme catalyses cyanate + hydrogencarbonate + 3 H(+) = NH4(+) + 2 CO2. Its function is as follows. Catalyzes the reaction of cyanate with bicarbonate to produce ammonia and carbon dioxide. The chain is Cyanate hydratase from Escherichia coli (strain K12 / DH10B).